The sequence spans 523 residues: Ribonuclease Y (523 aa).

The chain crosses the membrane as a helical span at residues 18–38 (WSLTVALVIGGALGFLVVWAF). Positions 213 to 276 (TSTIVSLPNE…EVARGALEAL (64 aa)) constitute a KH domain. Residues 339-432 (VLDHSVETAS…VILADTISAT (94 aa)) form the HD domain.

This sequence belongs to the RNase Y family.

The protein resides in the cell membrane. Endoribonuclease that initiates mRNA decay. The sequence is that of Ribonuclease Y from Opitutus terrae (strain DSM 11246 / JCM 15787 / PB90-1).